The sequence spans 477 residues: Transcription factor Sox-9-A (477 aa).

2 disordered regions span residues 1 to 66 (MNLL…ETED) and 157 to 274 (EAER…FRDV). A compositionally biased stretch (low complexity) spans 27–42 (SDDSAGSPCPSGSGSD). Basic and acidic residues-rich tracts occupy residues 56 to 66 (GDQELKKETED) and 157 to 174 (EAERLRVQHKKDHPDYKY). A Glycyl lysine isopeptide (Lys-Gly) (interchain with G-Cter in SUMO) cross-link involves residue Lys-61. The segment at 63 to 103 (ETEDEKFPVCIREAVSQVLKGYDWTLVPMPVRVNGSSKNKP) is dimerization (DIM). Positions 63–103 (ETEDEKFPVCIREAVSQVLKGYDWTLVPMPVRVNGSSKNKP) are PQA. Positions 105 to 173 (VKRPMNAFMV…QHKKDHPDYK (69 aa)) form a DNA-binding region, HMG box. The segment covering 211 to 222 (SPHSSSSMSEVH) has biased composition (low complexity). The tract at residues 224–308 (PGEHSGQSQG…LPPNGHPGVG (85 aa)) is transactivation domain (TAM). 2 consecutive short sequence motifs (9aaTAD) follow at residues 276-285 (IGELSSEVIS) and 291-299 (DVNEFDQYL). Residues 301–384 (PNGHPGVGST…SDQQQQHSPQ (84 aa)) form a disordered region. Composition is skewed to polar residues over residues 308–328 (GSTQASYTGSYGISSTPSATT) and 346–361 (HSLSTLNSEQSQSQQR). The transactivation domain (TAC) stretch occupies residues 361 to 477 (RTHIKTEQLS…QPVYTQLTRP (117 aa)). Lys-365 participates in a covalent cross-link: Glycyl lysine isopeptide (Lys-Gly) (interchain with G-Cter in SUMO). The segment covering 370–384 (SPSHYSDQQQQHSPQ) has biased composition (low complexity). A 9aaTAD 3 motif is present at residues 428-436 (SGLYSTFSY). Residues 446–477 (TPIADTTGVPSIPQTHSPQHWEQPVYTQLTRP) are disordered. A compositionally biased stretch (polar residues) spans 453-477 (GVPSIPQTHSPQHWEQPVYTQLTRP).

As to quaternary structure, interacts with the sumoylation factors ube2i/ubc9 and sumo1. Sumoylated. Lys-365 is the major site of sumoylation, although sumoylation at Lys-61 also occurs. Sumoylation plays a key role in regulating formation of the neural crest and otic placode. As to expression, from mid-gastrula (stage 10.5-11), expressed in a ring around the blastopore, with expression decreasing toward the dorsal side. At stage 12, expression around the blastopore decreases and begins to increase lateral to the neural plate in the presumptive neural crest, where expression dramatically increases around stage 14. Also expressed in the otic placode as early as stage 13/14. By the tailbud stage expression is restricted to the otic cup and then throughout the otic vesicle, with more intense staining at the dorsal-most region, the prospective region of the semicircular canals and endolymphatic duct. At the early tailbud stage (stage 23), expressed in migrating cranial neural crest cells and in the trunk neural crest. Also expressed in the genital ridges, developing eye, nasal placode and prospective pineal gland. Around stage 25, expression is down-regulated in the trunk neural crest but persists in the migrating cranial crest cells as they populate the pharyngeal arches, otic placode, developing eye, genital ridges and notochord. By stage 31, expression remains strong in the pharyngeal arches. Also expressed in the pancreas; first expressed at stage 25 in the pancreatic anlagen, dorsally in diverticulum. As development proceeds, expression continues in pancreatic tissue, being restricted to ventral and dorsal pancreatic buds.

The protein resides in the nucleus. Its subcellular location is the cytoplasm. In terms of biological role, transcription factor that plays a key role in chondrocytes differentiation and skeletal development. Specifically binds the 5'-ACAAAG-3' DNA motif present in enhancers and super-enhancers and promotes expression of genes important for chondrogenesis, including COL2A1. Plays a central role in successive steps of chondrocyte differentiation. Absolutely required for precartilaginous condensation, the first step in chondrogenesis during which skeletal progenitors differentiate into prechondrocytes. Together with SOX5 and SOX6, required for overt chondrogenesis when condensed prechondrocytes differentiate into early stage chondrocytes, the second step in chondrogenesis. Later, required to direct hypertrophic maturation and block osteoblast differentiation of growth plate chondrocytes: maintains chondrocyte columnar proliferation, delays prehypertrophy and then prevents osteoblastic differentiation of chondrocytes. Also required for chondrocyte hypertrophy, both indirectly, by keeping the lineage fate of chondrocytes, and directly, by remaining present in upper hypertrophic cells. Low lipid levels are the main nutritional determinant for chondrogenic commitment of skeletal progenitor cells: when lipids levels are low, FOXO transcription factors promote expression of SOX9, which induces chondrogenic commitment and suppresses fatty acid oxidation. In addition to cartilage development, also acts as a regulator of proliferation and differentiation in epithelial stem/progenitor cells. Involved in development of the cranial neural crest, which is fated to form skeletal elements. Also required for otic placode specification during inner ear development. In Xenopus laevis (African clawed frog), this protein is Transcription factor Sox-9-A (sox9-a).